The following is a 408-amino-acid chain: CCA-adding enzyme (408 aa).

Gly8 and Arg11 together coordinate ATP. The CTP site is built by Gly8 and Arg11. Positions 21 and 23 each coordinate Mg(2+). ATP-binding residues include Arg91, Arg137, and Arg140. The CTP site is built by Arg91, Arg137, and Arg140. The 104-residue stretch at 226–329 (TGYYTMTTLS…MTLFHVFDCW (104 aa)) folds into the HD domain.

Belongs to the tRNA nucleotidyltransferase/poly(A) polymerase family. Bacterial CCA-adding enzyme type 2 subfamily. The cofactor is Mg(2+).

The enzyme catalyses a tRNA precursor + 2 CTP + ATP = a tRNA with a 3' CCA end + 3 diphosphate. The catalysed reaction is a tRNA with a 3' CCA end + 2 CTP + ATP = a tRNA with a 3' CCACCA end + 3 diphosphate. Its function is as follows. Catalyzes the addition and repair of the essential 3'-terminal CCA sequence in tRNAs without using a nucleic acid template. Adds these three nucleotides in the order of C, C, and A to the tRNA nucleotide-73, using CTP and ATP as substrates and producing inorganic pyrophosphate. tRNA 3'-terminal CCA addition is required both for tRNA processing and repair. Also involved in tRNA surveillance by mediating tandem CCA addition to generate a CCACCA at the 3' terminus of unstable tRNAs. While stable tRNAs receive only 3'-terminal CCA, unstable tRNAs are marked with CCACCA and rapidly degraded. This is CCA-adding enzyme from Blochmanniella pennsylvanica (strain BPEN).